The sequence spans 763 residues: MAP7 domain-containing protein 2 (763 aa).

Residues 1-11 show a composition bias toward gly residues; that stretch reads MERSGGNGAGA. Disordered stretches follow at residues 1–72, 102–127, and 140–531; these read MERS…REKC, LEEQ…LREE, and ERTQ…KAMI. The span at 12-31 shows a compositional bias: low complexity; sequence RAGAPSEGAAKGSSLLSAKS. Over residues 53–72 the composition is skewed to basic and acidic residues; it reads LKSDERQRLAKERREEREKC. Polar residues-rich tracts occupy residues 184–212 and 241–251; these read PSDT…NLPK and LKSSYKSSPTR. The segment covering 312 to 321 has biased composition (low complexity); the sequence is KRSSSPVKSK. Basic and acidic residues-rich tracts occupy residues 354 to 372, 381 to 420, and 437 to 531; these read ETLK…KEGA, PREE…EHSA, and LAEK…KAMI. A coiled-coil region spans residues 434-575; that stretch reads AKILAEKRRQ…QERLERKKRI (142 aa).

This sequence belongs to the MAP7 family. As to quaternary structure, interacts (via N-terminus) with microtubules; facilitates microtubule stabilization. Interacts with kinesin-1 family members, KIF5A, KIF5B and KIF5C. Detected only in the brain and testis (at the protein level).

The protein resides in the cytoplasm. It is found in the cytoskeleton. The protein localises to the microtubule organizing center. Its subcellular location is the centrosome. It localises to the cell projection. The protein resides in the axon. In terms of biological role, microtubule-stabilizing protein involved in the control of cell motility and neurite outgrowth. Acts as a critical cofactor for kinesin transport; in the proximal axon regulates kinesin-1 family members, KIF5A, KIF5B and KIF5C recruitment to microtubules and contributes to kinesin-1-mediated transport in the axons. This is MAP7 domain-containing protein 2 (Map7d2) from Rattus norvegicus (Rat).